The chain runs to 597 residues: 2-succinyl-5-enolpyruvyl-6-hydroxy-3-cyclohexene-1-carboxylate synthase (597 aa).

The protein belongs to the TPP enzyme family. MenD subfamily. As to quaternary structure, homodimer. The cofactor is Mg(2+). Mn(2+) is required as a cofactor. Thiamine diphosphate serves as cofactor.

It catalyses the reaction isochorismate + 2-oxoglutarate + H(+) = 5-enolpyruvoyl-6-hydroxy-2-succinyl-cyclohex-3-ene-1-carboxylate + CO2. The protein operates within quinol/quinone metabolism; 1,4-dihydroxy-2-naphthoate biosynthesis; 1,4-dihydroxy-2-naphthoate from chorismate: step 2/7. Its pathway is cofactor biosynthesis; phylloquinone biosynthesis. Its function is as follows. Catalyzes the thiamine diphosphate-dependent decarboxylation of 2-oxoglutarate and the subsequent addition of the resulting succinic semialdehyde-thiamine pyrophosphate anion to isochorismate to yield 2-succinyl-5-enolpyruvyl-6-hydroxy-3-cyclohexene-1-carboxylate (SEPHCHC). The protein is 2-succinyl-5-enolpyruvyl-6-hydroxy-3-cyclohexene-1-carboxylate synthase of Synechococcus sp. (strain JA-3-3Ab) (Cyanobacteria bacterium Yellowstone A-Prime).